Reading from the N-terminus, the 389-residue chain is 26S proteasome regulatory subunit 6B homolog (389 aa).

175-182 (GPPGTGKT) is a binding site for ATP.

Belongs to the AAA ATPase family.

The protein localises to the cytoplasm. It is found in the nucleus. Its function is as follows. The 26S proteasome is involved in the ATP-dependent degradation of ubiquitinated proteins. The regulatory (or ATPase) complex confers ATP dependency and substrate specificity to the 26S complex. The protein is 26S proteasome regulatory subunit 6B homolog (rpt3) of Schizosaccharomyces pombe (strain 972 / ATCC 24843) (Fission yeast).